The primary structure comprises 258 residues: uncharacterized protein (258 aa).

3 helical membrane passes run 38–58, 72–92, and 111–131; these read VFGL…LFIA, ALIF…IIFI, and FLVI…MLWW.

It localises to the cell membrane. This is an uncharacterized protein from Mycoplasma pneumoniae (strain ATCC 29342 / M129 / Subtype 1) (Mycoplasmoides pneumoniae).